Consider the following 103-residue polypeptide: MATKLSIIVFSIVVLHLLLSAHMHFLINVCAECETKSAIPPLLECGPRCGDRCSNTQYKKPCLFFCNKCCNKCLCVPPGTYGNKQVCPCYNNWKTKSGGPKCP.

The first 20 residues, 1–20 (MATKLSIIVFSIVVLHLLLS), serve as a signal peptide directing secretion.

The protein belongs to the GASA family. Post-translationally, six disulfide bonds may be present.

It localises to the secreted. In terms of biological role, gibberellin-regulated protein that may function in hormonal controlled steps of development such as seed germination, flowering and seed maturation. This chain is Gibberellin-regulated protein 13 (GASA13), found in Arabidopsis thaliana (Mouse-ear cress).